A 346-amino-acid polypeptide reads, in one-letter code: Peripherin-2 (346 aa).

At 1 to 24 (MALLKVKFDQKKRVKLAQGLWLMN) the chain is on the cytoplasmic side. Residues 25–43 (WLSVLAGIVIFSLGLFLKI) form a helical membrane-spanning segment. The Lumenal segment spans residues 44 to 61 (ELRKRSDVMNNSESHFVP). An N-linked (GlcNAc...) asparagine glycan is attached at Asn53. Residues 62–80 (NSLIVMGVLSCVFNSLAGK) traverse the membrane as a helical segment. Over 81–99 (ICYDALDPAKYAKWKPWLK) the chain is Cytoplasmic. Residues 100–123 (PYLAVCVLFNIALFLVTLCCFLMR) traverse the membrane as a helical segment. The Lumenal segment spans residues 124 to 264 (GSLESTLAHG…LSYYSSLMNS (141 aa)). Residue Asn229 is glycosylated (N-linked (GlcNAc...) asparagine). The helical transmembrane segment at 265 to 290 (MGAVTLLVWLFEVTITIGLRYLHTAL) threads the bilayer. Residues 291–346 (EGVSNPEDPECESEGWLLEKSVSETWKAFLESLKKLGKSNQVEAEGADAGQAPEAG) lie on the Cytoplasmic side of the membrane. The segment at 341–346 (QAPEAG) is interaction with MREG.

This sequence belongs to the PRPH2/ROM1 family. Homodimer; disulfide-linked. Forms a homotetramer. Forms a heterotetramer with ROM1. Homotetramer and heterotetramer core complexes go on to form higher order complexes by formation of intermolecular disulfide bonds. Interacts with MREG. Interacts with STX3. Interacts with SNAP25. Retina (photoreceptor). In rim region of ROS (rod outer segment) disks.

The protein resides in the membrane. It is found in the cell projection. The protein localises to the cilium. Its subcellular location is the photoreceptor outer segment. It localises to the photoreceptor inner segment. In terms of biological role, essential for retina photoreceptor outer segment disk morphogenesis, may also play a role with ROM1 in the maintenance of outer segment disk structure. Required for the maintenance of retinal outer nuclear layer thickness. Required for the correct development and organization of the photoreceptor inner segment. In Canis lupus familiaris (Dog), this protein is Peripherin-2 (PRPH2).